The primary structure comprises 363 residues: Ribonuclease P protein subunit p40 (363 aa).

In terms of assembly, component of nuclear RNase P and RNase MRP ribonucleoproteins. RNase P consists of a catalytic RNA moiety and about 10 protein subunits; POP1, POP4, POP5, POP7, RPP14, RPP21, RPP25, RPP30, RPP38 and RPP40. Within the RNase P complex, POP1, POP7 and RPP25 form the 'finger' subcomplex, POP5, RPP14, RPP40 and homodimeric RPP30 form the 'palm' subcomplex, and RPP21, POP4 and RPP38 form the 'wrist' subcomplex. All subunits of the RNase P complex interact with the catalytic RNA. Several subunits of RNase P are also part of the RNase MRP complex. RNase MRP consists of a catalytic RNA moiety and about 8 protein subunits; POP1, POP7, RPP25, RPP30, RPP38, RPP40 and possibly also POP4 and POP5.

Its subcellular location is the nucleus. It localises to the nucleolus. Component of ribonuclease P, a ribonucleoprotein complex that generates mature tRNA molecules by cleaving their 5'-ends. Also a component of the MRP ribonuclease complex, which cleaves pre-rRNA sequences. The polypeptide is Ribonuclease P protein subunit p40 (RPP40) (Homo sapiens (Human)).